Consider the following 141-residue polypeptide: Large ribosomal subunit protein uL11 (141 aa).

This sequence belongs to the universal ribosomal protein uL11 family. As to quaternary structure, part of the ribosomal stalk of the 50S ribosomal subunit. Interacts with L10 and the large rRNA to form the base of the stalk. L10 forms an elongated spine to which L12 dimers bind in a sequential fashion forming a multimeric L10(L12)X complex. Post-translationally, one or more lysine residues are methylated.

Its function is as follows. Forms part of the ribosomal stalk which helps the ribosome interact with GTP-bound translation factors. This Aliarcobacter butzleri (strain RM4018) (Arcobacter butzleri) protein is Large ribosomal subunit protein uL11.